Reading from the N-terminus, the 219-residue chain is Uracil-DNA glycosylase (219 aa).

Residue Asp61 is the Proton acceptor of the active site.

This sequence belongs to the uracil-DNA glycosylase (UDG) superfamily. UNG family.

Its subcellular location is the cytoplasm. The enzyme catalyses Hydrolyzes single-stranded DNA or mismatched double-stranded DNA and polynucleotides, releasing free uracil.. In terms of biological role, excises uracil residues from the DNA which can arise as a result of misincorporation of dUMP residues by DNA polymerase or due to deamination of cytosine. In Haemophilus influenzae (strain PittEE), this protein is Uracil-DNA glycosylase.